A 198-amino-acid chain; its full sequence is Nucleoid occlusion factor SlmA (198 aa).

One can recognise an HTH tetR-type domain in the interval 10–70 (NRREEILQSL…SLIEFIEDSL (61 aa)). Positions 33–52 (TTAKLAASVGVSEAALYRHF) form a DNA-binding region, H-T-H motif. A coiled-coil region spans residues 117–144 (EQDRLQGRINQLFERIEAQLRQVLREKR).

It belongs to the nucleoid occlusion factor SlmA family. Homodimer. Interacts with FtsZ.

It is found in the cytoplasm. The protein resides in the nucleoid. In terms of biological role, required for nucleoid occlusion (NO) phenomenon, which prevents Z-ring formation and cell division over the nucleoid. Acts as a DNA-associated cell division inhibitor that binds simultaneously chromosomal DNA and FtsZ, and disrupts the assembly of FtsZ polymers. SlmA-DNA-binding sequences (SBS) are dispersed on non-Ter regions of the chromosome, preventing FtsZ polymerization at these regions. This is Nucleoid occlusion factor SlmA from Escherichia coli (strain 55989 / EAEC).